Reading from the N-terminus, the 417-residue chain is Gamma-glutamyl phosphate reductase (417 aa).

Belongs to the gamma-glutamyl phosphate reductase family.

Its subcellular location is the cytoplasm. The enzyme catalyses L-glutamate 5-semialdehyde + phosphate + NADP(+) = L-glutamyl 5-phosphate + NADPH + H(+). The protein operates within amino-acid biosynthesis; L-proline biosynthesis; L-glutamate 5-semialdehyde from L-glutamate: step 2/2. Its function is as follows. Catalyzes the NADPH-dependent reduction of L-glutamate 5-phosphate into L-glutamate 5-semialdehyde and phosphate. The product spontaneously undergoes cyclization to form 1-pyrroline-5-carboxylate. The chain is Gamma-glutamyl phosphate reductase from Serratia marcescens.